Here is a 95-residue protein sequence, read N- to C-terminus: Aspartyl/glutamyl-tRNA(Asn/Gln) amidotransferase subunit C (95 aa).

The protein belongs to the GatC family. Heterotrimer of A, B and C subunits.

The enzyme catalyses L-glutamyl-tRNA(Gln) + L-glutamine + ATP + H2O = L-glutaminyl-tRNA(Gln) + L-glutamate + ADP + phosphate + H(+). The catalysed reaction is L-aspartyl-tRNA(Asn) + L-glutamine + ATP + H2O = L-asparaginyl-tRNA(Asn) + L-glutamate + ADP + phosphate + 2 H(+). Its function is as follows. Allows the formation of correctly charged Asn-tRNA(Asn) or Gln-tRNA(Gln) through the transamidation of misacylated Asp-tRNA(Asn) or Glu-tRNA(Gln) in organisms which lack either or both of asparaginyl-tRNA or glutaminyl-tRNA synthetases. The reaction takes place in the presence of glutamine and ATP through an activated phospho-Asp-tRNA(Asn) or phospho-Glu-tRNA(Gln). This is Aspartyl/glutamyl-tRNA(Asn/Gln) amidotransferase subunit C from Geobacter sp. (strain M21).